The chain runs to 424 residues: GTPase Obg (424 aa).

The Obg domain occupies 1 to 158 (MFVDKARIFV…RWISLELKLL (158 aa)). One can recognise an OBG-type G domain in the interval 159–331 (ADVGLIGFPN…LLKECARVLS (173 aa)). GTP-binding positions include 165–172 (GFPNVGKS), 190–194 (FTTIT), 212–215 (DIPG), 282–285 (NKAD), and 312–314 (SAA). Mg(2+) is bound by residues Ser-172 and Thr-192. The OCT domain maps to 345-424 (RFVPEDKHFT…LNDFEFEFLK (80 aa)).

This sequence belongs to the TRAFAC class OBG-HflX-like GTPase superfamily. OBG GTPase family. As to quaternary structure, monomer. The cofactor is Mg(2+).

The protein resides in the cytoplasm. An essential GTPase which binds GTP, GDP and possibly (p)ppGpp with moderate affinity, with high nucleotide exchange rates and a fairly low GTP hydrolysis rate. Plays a role in control of the cell cycle, stress response, ribosome biogenesis and in those bacteria that undergo differentiation, in morphogenesis control. The sequence is that of GTPase Obg from Clostridium acetobutylicum (strain ATCC 824 / DSM 792 / JCM 1419 / IAM 19013 / LMG 5710 / NBRC 13948 / NRRL B-527 / VKM B-1787 / 2291 / W).